A 608-amino-acid polypeptide reads, in one-letter code: Tectonic-3 (608 aa).

The signal sequence occupies residues 1–22 (MRTPQLALLQVFLLMFPDGVRP). Residues 23–58 (QPSSSPSGAVPTSLDLQPGTVGGTLQSSSEATATRP) are disordered. The Extracellular portion of the chain corresponds to 23–586 (QPSSSPSGAV…AFSRGVSSQK (564 aa)). Residues 45–54 (GTLQSSSEAT) show a composition bias toward polar residues. Asn78, Asn179, and Asn347 each carry an N-linked (GlcNAc...) asparagine glycan. The helical transmembrane segment at 587–607 (CSVSPVLILCLLLLGVLNLET) threads the bilayer. Thr608 is a topological domain (cytoplasmic).

It belongs to the tectonic family. Part of the tectonic-like complex (also named B9 complex).

Its subcellular location is the membrane. In terms of biological role, part of the tectonic-like complex which is required for tissue-specific ciliogenesis and may regulate ciliary membrane composition. May be involved in apoptosis regulation. Necessary for signal transduction through the sonic hedgehog (Shh) signaling pathway. This chain is Tectonic-3 (TCTN3), found in Macaca fascicularis (Crab-eating macaque).